The sequence spans 387 residues: GTP-binding protein 10 (387 aa).

Residues 13 to 148 (GNFIDKLRLF…RIIHLDLKLI (136 aa)) enclose the Obg domain. The OBG-type G domain occupies 149-344 (ADVGLVGFPN…LKNCIRKSLD (196 aa)). Residues 155–162 (GFPNAGKS), 202–206 (DLPGL), and 278–281 (NKMD) each bind GTP.

It belongs to the TRAFAC class OBG-HflX-like GTPase superfamily. OBG GTPase family.

It localises to the nucleus. The protein resides in the nucleolus. The protein localises to the chromosome. In terms of biological role, may be involved in the ribosome maturation process. Complements an ObgE(CgtA) function in E.coli ribosome maturation. Plays a role of GTPase in vitro. When missing, disorganization of the nucleolar architecture is observed. The sequence is that of GTP-binding protein 10 (GTPBP10) from Homo sapiens (Human).